Reading from the N-terminus, the 256-residue chain is Phosphatidylglycerol--prolipoprotein diacylglyceryl transferase (256 aa).

The next 3 membrane-spanning stretches (helical) occupy residues 19-39, 56-76, and 91-111; these read VHWY…LGYW, LIFY…MLFY, and IWEG…AAWL. Arg-139 is an a 1,2-diacyl-sn-glycero-3-phospho-(1'-sn-glycerol) binding site. The helical transmembrane segment at 231–251 threads the bilayer; it reads FGWLTMGQVLSIPMLLIGIWL.

The protein belongs to the Lgt family.

It is found in the cell inner membrane. The enzyme catalyses L-cysteinyl-[prolipoprotein] + a 1,2-diacyl-sn-glycero-3-phospho-(1'-sn-glycerol) = an S-1,2-diacyl-sn-glyceryl-L-cysteinyl-[prolipoprotein] + sn-glycerol 1-phosphate + H(+). The protein operates within protein modification; lipoprotein biosynthesis (diacylglyceryl transfer). Catalyzes the transfer of the diacylglyceryl group from phosphatidylglycerol to the sulfhydryl group of the N-terminal cysteine of a prolipoprotein, the first step in the formation of mature lipoproteins. This is Phosphatidylglycerol--prolipoprotein diacylglyceryl transferase from Legionella pneumophila (strain Corby).